Here is a 72-residue protein sequence, read N- to C-terminus: Translation initiation factor IF-1 (72 aa).

In terms of domain architecture, S1-like spans 1–72 (MAKDDVIEID…DKGRITYRYK (72 aa)).

It belongs to the IF-1 family. Component of the 30S ribosomal translation pre-initiation complex which assembles on the 30S ribosome in the order IF-2 and IF-3, IF-1 and N-formylmethionyl-tRNA(fMet); mRNA recruitment can occur at any time during PIC assembly.

It localises to the cytoplasm. Its function is as follows. One of the essential components for the initiation of protein synthesis. Stabilizes the binding of IF-2 and IF-3 on the 30S subunit to which N-formylmethionyl-tRNA(fMet) subsequently binds. Helps modulate mRNA selection, yielding the 30S pre-initiation complex (PIC). Upon addition of the 50S ribosomal subunit IF-1, IF-2 and IF-3 are released leaving the mature 70S translation initiation complex. The polypeptide is Translation initiation factor IF-1 (Campylobacter fetus subsp. fetus (strain 82-40)).